The sequence spans 369 residues: Melanoma-associated antigen 10 (369 aa).

The disordered stretch occupies residues 1 to 131 (MPRAPKRQRC…VLPDSESLPR (131 aa)). A compositionally biased stretch (low complexity) spans 39–62 (SSSTSTSSSFPSSFPSSSSSSSSS). Polar residues-rich tracts occupy residues 85-96 (QSAQIACSSPSV) and 107-121 (EGSSSQKEESPSTLQ). Residues 134–333 (IDEKVTDLVQ…RSFPLWYEEA (200 aa)) form the MAGE domain. Positions 340–369 (RAQDRIATTDDTTAMASASSSATGSFSYPE) are disordered. Residues 348–369 (TDDTTAMASASSSATGSFSYPE) are compositionally biased toward low complexity.

Expressed in many tumors of several types, such as melanoma, head and neck squamous cell carcinoma, lung carcinoma and breast carcinoma, but not in normal tissues except for spermatogonia, spermatocytes and placenta.

The protein localises to the nucleus. Not known, though may play a role in embryonal development and tumor transformation or aspects of tumor progression. This chain is Melanoma-associated antigen 10 (MAGEA10), found in Homo sapiens (Human).